The primary structure comprises 194 residues: Putative 3-methyladenine DNA glycosylase (194 aa).

This sequence belongs to the DNA glycosylase MPG family.

This is Putative 3-methyladenine DNA glycosylase from Aeropyrum pernix (strain ATCC 700893 / DSM 11879 / JCM 9820 / NBRC 100138 / K1).